The sequence spans 527 residues: MDEEEEEEVTDLKLQLFHNTVREHIIFLLLIILLYSSSYVVVSRFRRRDRDDLYSNDEDEVLVYRISFWLCTFTLAVAEGAAMLLPVSIASNEVLLLYPNSYYVKWLNSSLIQGLWNHVFLFSNLSLFIFLPFVYLFSESTGFVGNKKGILPRVYETFTVFMLMAIIVLVLTAVLSAVFGIEKLQFFWFLNLGSVHLPFLYSCVSFLGVMLMLICTPYGFVRLFGVVNQVLVRPMLLRDVNEEFSAFYMEEASVKRKLAHIELHNVSIADAANGGRLGNRIGLGRGRTFYPQPLLQHSQAHLYQRKAMASDVDELNDRLRELDSERKELDKLRTSSTFQRTFVYPLAMLLLLFCTAVTILLVVQNTLELLIGIKALPLSTRQFALGISSLSKLGPFGAGLEVCLIFYLGATSVVGFYSMPFMRKVCPKRRQTSLPQLMLNCGFMLVLSSALPLLSRIIGITNFDLLGDFGAIEWLGNFQIVLLYNLVFGTTTALCLANKFTATVRRELRARLVENYVLFTNYISFIN.

The Extracellular segment spans residues 1-22 (MDEEEEEEVTDLKLQLFHNTVR). The helical transmembrane segment at 23–43 (EHIIFLLLIILLYSSSYVVVS) threads the bilayer. Residues 44–65 (RFRRRDRDDLYSNDEDEVLVYR) lie on the Cytoplasmic side of the membrane. A helical transmembrane segment spans residues 66–86 (ISFWLCTFTLAVAEGAAMLLP). Topologically, residues 87–117 (VSIASNEVLLLYPNSYYVKWLNSSLIQGLWN) are extracellular. Residues 118 to 138 (HVFLFSNLSLFIFLPFVYLFS) form a helical membrane-spanning segment. Residues 139–160 (ESTGFVGNKKGILPRVYETFTV) are Cytoplasmic-facing. Residues 161–181 (FMLMAIIVLVLTAVLSAVFGI) form a helical membrane-spanning segment. The Extracellular portion of the chain corresponds to 182–194 (EKLQFFWFLNLGS). Residues 195–215 (VHLPFLYSCVSFLGVMLMLIC) traverse the membrane as a helical segment. At 216 to 341 (TPYGFVRLFG…LRTSSTFQRT (126 aa)) the chain is on the cytoplasmic side. The helical transmembrane segment at 342 to 362 (FVYPLAMLLLLFCTAVTILLV) threads the bilayer. The Extracellular portion of the chain corresponds to 363–395 (VQNTLELLIGIKALPLSTRQFALGISSLSKLGP). Residues 396–416 (FGAGLEVCLIFYLGATSVVGF) form a helical membrane-spanning segment. Residues 417–433 (YSMPFMRKVCPKRRQTS) lie on the Cytoplasmic side of the membrane. A helical membrane pass occupies residues 434-454 (LPQLMLNCGFMLVLSSALPLL). Topologically, residues 455 to 468 (SRIIGITNFDLLGD) are extracellular. The helical transmembrane segment at 469-489 (FGAIEWLGNFQIVLLYNLVFG) threads the bilayer. Topologically, residues 490-527 (TTTALCLANKFTATVRRELRARLVENYVLFTNYISFIN) are cytoplasmic.

It belongs to the LIMR family. In terms of tissue distribution, in the ovary, detected in germline stem cells and their progeny. Also detected in the somatic follicular epithelium.

The protein localises to the cell membrane. In terms of biological role, required during oogenesis to promote self-renewal of germline stem cells, probably by enhancing BMP signaling activity. The chain is Protein Lilipod from Drosophila melanogaster (Fruit fly).